We begin with the raw amino-acid sequence, 187 residues long: 1,6-anhydro-N-acetylmuramyl-L-alanine amidase AmpD (187 aa).

In terms of domain architecture, N-acetylmuramoyl-L-alanine amidase spans 29 to 167; the sequence is TLLVVHNISL…APERKTDPGP (139 aa). His-34 contributes to the Zn(2+) binding site. Residue Glu-116 is the Proton acceptor of the active site. Zn(2+) contacts are provided by His-154 and Asp-164.

It belongs to the N-acetylmuramoyl-L-alanine amidase 2 family. It depends on Zn(2+) as a cofactor.

The protein resides in the cytoplasm. It catalyses the reaction Hydrolyzes the link between N-acetylmuramoyl residues and L-amino acid residues in certain cell-wall glycopeptides.. Its function is as follows. Involved in cell wall peptidoglycan recycling. Specifically cleaves the amide bond between the lactyl group of N-acetylmuramic acid and the alpha-amino group of the L-alanine in degradation products containing an anhydro N-acetylmuramyl moiety. This is 1,6-anhydro-N-acetylmuramyl-L-alanine amidase AmpD from Enterobacter cloacae.